Reading from the N-terminus, the 343-residue chain is N-acetyl-gamma-glutamyl-phosphate reductase (343 aa).

C147 is a catalytic residue.

Belongs to the NAGSA dehydrogenase family. Type 1 subfamily.

It is found in the cytoplasm. It catalyses the reaction N-acetyl-L-glutamate 5-semialdehyde + phosphate + NADP(+) = N-acetyl-L-glutamyl 5-phosphate + NADPH + H(+). The protein operates within amino-acid biosynthesis; L-arginine biosynthesis; N(2)-acetyl-L-ornithine from L-glutamate: step 3/4. In terms of biological role, catalyzes the NADPH-dependent reduction of N-acetyl-5-glutamyl phosphate to yield N-acetyl-L-glutamate 5-semialdehyde. This Staphylococcus aureus (strain USA300) protein is N-acetyl-gamma-glutamyl-phosphate reductase.